Consider the following 515-residue polypeptide: ATP synthase subunit alpha (515 aa).

171-178 (GDRQTGKT) provides a ligand contact to ATP.

It belongs to the ATPase alpha/beta chains family. As to quaternary structure, F-type ATPases have 2 components, CF(1) - the catalytic core - and CF(0) - the membrane proton channel. CF(1) has five subunits: alpha(3), beta(3), gamma(1), delta(1), epsilon(1). CF(0) has three main subunits: a(1), b(2) and c(9-12). The alpha and beta chains form an alternating ring which encloses part of the gamma chain. CF(1) is attached to CF(0) by a central stalk formed by the gamma and epsilon chains, while a peripheral stalk is formed by the delta and b chains.

The protein resides in the cell inner membrane. The catalysed reaction is ATP + H2O + 4 H(+)(in) = ADP + phosphate + 5 H(+)(out). Functionally, produces ATP from ADP in the presence of a proton gradient across the membrane. The alpha chain is a regulatory subunit. This Xylella fastidiosa (strain Temecula1 / ATCC 700964) protein is ATP synthase subunit alpha.